A 456-amino-acid polypeptide reads, in one-letter code: ATP synthase subunit beta 1 (456 aa).

152–159 (GGAGVGKS) is an ATP binding site.

It belongs to the ATPase alpha/beta chains family. F-type ATPases have 2 components, CF(1) - the catalytic core - and CF(0) - the membrane proton channel. CF(1) has five subunits: alpha(3), beta(3), gamma(1), delta(1), epsilon(1). CF(0) has three main subunits: a(1), b(2) and c(9-12). The alpha and beta chains form an alternating ring which encloses part of the gamma chain. CF(1) is attached to CF(0) by a central stalk formed by the gamma and epsilon chains, while a peripheral stalk is formed by the delta and b chains.

Its subcellular location is the cell membrane. The catalysed reaction is ATP + H2O + 4 H(+)(in) = ADP + phosphate + 5 H(+)(out). Functionally, produces ATP from ADP in the presence of a proton gradient across the membrane. The catalytic sites are hosted primarily by the beta subunits. The chain is ATP synthase subunit beta 1 from Listeria innocua serovar 6a (strain ATCC BAA-680 / CLIP 11262).